A 154-amino-acid polypeptide reads, in one-letter code: Cytochrome c' (154 aa).

Positions 1-23 (MKHVLASTAAGLMALGLASSAIA) are cleaved as a signal peptide. Heme c contacts are provided by R35, Q36, R95, C144, C147, and H148.

Homodimer. Post-translationally, binds 1 heme c group covalently per subunit.

Functionally, cytochrome c' is the most widely occurring bacterial c-type cytochrome. Cytochromes c' are high-spin proteins and the heme has no sixth ligand. Their exact function is not known. In Allochromatium vinosum (strain ATCC 17899 / DSM 180 / NBRC 103801 / NCIMB 10441 / D) (Chromatium vinosum), this protein is Cytochrome c' (cycA).